The chain runs to 853 residues: Putative dipeptidyl aminopeptidase C14C4.15c (853 aa).

The interval 1–26 (MNAYEGDTLNNHGKSSTRQHWRKRSA) is disordered. Topologically, residues 1 to 65 (MNAYEGDTLN…AKKRRRKKHR (65 aa)) are cytoplasmic. Residues 15–25 (SSTRQHWRKRS) are compositionally biased toward basic residues. The helical; Signal-anchor for type II membrane protein transmembrane segment at 66-86 (YIYLAVCLFFLASVLSCAIIF) threads the bilayer. At 87-853 (RFYLHTNREN…SGHFHHALYC (767 aa)) the chain is on the lumenal side. 5 N-linked (GlcNAc...) asparagine glycosylation sites follow: Asn96, Asn102, Asn472, Asn483, and Asn613. Active-site charge relay system residues include Ser719, Asp795, and His828.

This sequence belongs to the peptidase S9B family.

It localises to the vacuole membrane. In Schizosaccharomyces pombe (strain 972 / ATCC 24843) (Fission yeast), this protein is Putative dipeptidyl aminopeptidase C14C4.15c.